We begin with the raw amino-acid sequence, 132 residues long: Large ribosomal subunit protein uL14 (132 aa).

The protein belongs to the universal ribosomal protein uL14 family. The L3/L14/L24e cluster may contact the 16S rRNA in 2 intersubunit bridges. Part of the 50S ribosomal subunit. Forms a cluster with proteins L3 and L24e.

In terms of biological role, forms part of two intersubunit bridges in the 70S ribosome. Binds to 23S rRNA. The sequence is that of Large ribosomal subunit protein uL14 from Haloarcula marismortui (strain ATCC 43049 / DSM 3752 / JCM 8966 / VKM B-1809) (Halobacterium marismortui).